The chain runs to 452 residues: Bifunctional protein GlmU (452 aa).

The pyrophosphorylase stretch occupies residues 1–232 (MTTNAPGAVI…EADMQGVNSR (232 aa)). UDP-N-acetyl-alpha-D-glucosamine contacts are provided by residues 11-14 (LAAG), Lys-25, Gln-78, and 83-84 (GT). Asp-108 is a binding site for Mg(2+). Positions 144, 158, and 230 each coordinate UDP-N-acetyl-alpha-D-glucosamine. Asn-230 is a binding site for Mg(2+). A linker region spans residues 233 to 253 (ADLAAAEATMQQRLRMAAMAG). Residues 254-452 (GVTMLDPSSV…HKDKKKASGE (199 aa)) are N-acetyltransferase. Positions 319 and 337 each coordinate UDP-N-acetyl-alpha-D-glucosamine. His-349 serves as the catalytic Proton acceptor. UDP-N-acetyl-alpha-D-glucosamine is bound by residues Tyr-352 and Asn-363. Acetyl-CoA is bound by residues Ala-366, 372 to 373 (NY), Ser-391, Ser-409, and Arg-426.

The protein in the N-terminal section; belongs to the N-acetylglucosamine-1-phosphate uridyltransferase family. It in the C-terminal section; belongs to the transferase hexapeptide repeat family. Homotrimer. The cofactor is Mg(2+).

The protein localises to the cytoplasm. It catalyses the reaction alpha-D-glucosamine 1-phosphate + acetyl-CoA = N-acetyl-alpha-D-glucosamine 1-phosphate + CoA + H(+). It carries out the reaction N-acetyl-alpha-D-glucosamine 1-phosphate + UTP + H(+) = UDP-N-acetyl-alpha-D-glucosamine + diphosphate. It participates in nucleotide-sugar biosynthesis; UDP-N-acetyl-alpha-D-glucosamine biosynthesis; N-acetyl-alpha-D-glucosamine 1-phosphate from alpha-D-glucosamine 6-phosphate (route II): step 2/2. It functions in the pathway nucleotide-sugar biosynthesis; UDP-N-acetyl-alpha-D-glucosamine biosynthesis; UDP-N-acetyl-alpha-D-glucosamine from N-acetyl-alpha-D-glucosamine 1-phosphate: step 1/1. The protein operates within bacterial outer membrane biogenesis; LPS lipid A biosynthesis. In terms of biological role, catalyzes the last two sequential reactions in the de novo biosynthetic pathway for UDP-N-acetylglucosamine (UDP-GlcNAc). The C-terminal domain catalyzes the transfer of acetyl group from acetyl coenzyme A to glucosamine-1-phosphate (GlcN-1-P) to produce N-acetylglucosamine-1-phosphate (GlcNAc-1-P), which is converted into UDP-GlcNAc by the transfer of uridine 5-monophosphate (from uridine 5-triphosphate), a reaction catalyzed by the N-terminal domain. The sequence is that of Bifunctional protein GlmU from Parvibaculum lavamentivorans (strain DS-1 / DSM 13023 / NCIMB 13966).